We begin with the raw amino-acid sequence, 793 residues long: Peroxidase-like protein (793 aa).

Positions 1-20 (MNLFICHVFLLLLHGYLIIC) are cleaved as a signal peptide.

The protein belongs to the peroxidase family. In terms of tissue distribution, prismatic layer of shell (at protein level). Expressed primarily in the mantle with highest level in the mantle edge and lower level in the mantle pallium.

The protein localises to the secreted. This is Peroxidase-like protein from Margaritifera margaritifera (Freshwater pearl mussel).